A 379-amino-acid polypeptide reads, in one-letter code: Cytokine receptor common subunit gamma (379 aa).

The N-terminal stretch at 1–22 (MLKPPLPLRSLLFLQLPLLGVG) is a signal peptide. The Extracellular portion of the chain corresponds to 23–269 (LNPKFLTPSG…ENIENPENPS (247 aa)). A disulfide bridge links C68 with C78. N-linked (GlcNAc...) asparagine glycans are attached at residues N77, N81, and N90. C109 and C122 are joined by a disulfide. Positions 163 to 260 (APENLTLRNL…IHWGSNTSKE (98 aa)) constitute a Fibronectin type-III domain. 2 N-linked (GlcNAc...) asparagine glycosylation sites follow: N166 and N171. The WSXWS motif motif lies at 244 to 248 (WSDWS). A helical membrane pass occupies residues 270 to 290 (LFALEAVLIPLGSMGLIVSLI). The Cytoplasmic portion of the chain corresponds to 291-379 (CVYCWLERTM…PPCYTLKPEP (89 aa)). Residues 299–307 (TMPRIPTLK) carry the Box 1 motif motif. The residue at position 305 (T305) is a Phosphothreonine. Residues 349 to 370 (PPKGGEGPGGSPCSQHSPYWAP) form a disordered region.

Belongs to the type I cytokine receptor family. Type 5 subfamily. The gamma subunit is common to the IL2, IL4, IL7, IL15, IL21 and probably also the IL13 receptors. Interacts with SHB upon interleukin stimulation.

The protein resides in the cell membrane. It is found in the cell surface. Its function is as follows. Common subunit for the receptors for a variety of interleukins. Probably in association with IL15RA, involved in the stimulation of neutrophil phagocytosis by IL15. This chain is Cytokine receptor common subunit gamma (IL2RG), found in Bos taurus (Bovine).